The sequence spans 388 residues: UPF0496 protein 1 (388 aa).

The segment at 1–25 (MGNSSSSGSHRPPRPASSESALPPA) is disordered. Residues 198-227 (QAVYRQQLTMLEKLQQRKHRLDKKVRAIKA) are a coiled coil. 2 consecutive transmembrane segments (helical) span residues 234 to 254 (IIFA…AAIA) and 257 to 277 (PVAA…GKWI). Residues 344–376 (VEEIKKKLEVFMKSVEDLGEQADRCSRDIRRAR) are a coiled coil.

The protein belongs to the UPF0496 family.

It localises to the membrane. The chain is UPF0496 protein 1 from Oryza sativa subsp. japonica (Rice).